Here is a 298-residue protein sequence, read N- to C-terminus: Oxygen-dependent coproporphyrinogen-III oxidase (298 aa).

Serine 90 serves as a coordination point for substrate. Histidine 94 and histidine 104 together coordinate a divalent metal cation. Histidine 104 (proton donor) is an active-site residue. Residue 106 to 108 (NVR) participates in substrate binding. 2 residues coordinate a divalent metal cation: histidine 143 and histidine 173. The tract at residues 238–273 (YVEFNLVWDRGTLFGLQSGGRTESILMSLPPIVKWR) is important for dimerization. Residue 256 to 258 (GGR) participates in substrate binding.

The protein belongs to the aerobic coproporphyrinogen-III oxidase family. Homodimer. It depends on a divalent metal cation as a cofactor.

It is found in the cytoplasm. It catalyses the reaction coproporphyrinogen III + O2 + 2 H(+) = protoporphyrinogen IX + 2 CO2 + 2 H2O. It functions in the pathway porphyrin-containing compound metabolism; protoporphyrin-IX biosynthesis; protoporphyrinogen-IX from coproporphyrinogen-III (O2 route): step 1/1. Functionally, involved in the heme biosynthesis. Catalyzes the aerobic oxidative decarboxylation of propionate groups of rings A and B of coproporphyrinogen-III to yield the vinyl groups in protoporphyrinogen-IX. This Dechloromonas aromatica (strain RCB) protein is Oxygen-dependent coproporphyrinogen-III oxidase.